Consider the following 143-residue polypeptide: Large-conductance mechanosensitive channel (143 aa).

A run of 2 helical transmembrane segments spans residues 10 to 30 and 89 to 109; these read FAVK…GAFS and GSFI…FLMV.

Belongs to the MscL family. In terms of assembly, homopentamer.

It is found in the cell inner membrane. Channel that opens in response to stretch forces in the membrane lipid bilayer. May participate in the regulation of osmotic pressure changes within the cell. This is Large-conductance mechanosensitive channel from Burkholderia cenocepacia (strain ATCC BAA-245 / DSM 16553 / LMG 16656 / NCTC 13227 / J2315 / CF5610) (Burkholderia cepacia (strain J2315)).